A 371-amino-acid polypeptide reads, in one-letter code: S-adenosylmethionine:tRNA ribosyltransferase-isomerase (371 aa).

It belongs to the QueA family. Monomer.

It localises to the cytoplasm. The enzyme catalyses 7-aminomethyl-7-carbaguanosine(34) in tRNA + S-adenosyl-L-methionine = epoxyqueuosine(34) in tRNA + adenine + L-methionine + 2 H(+). The protein operates within tRNA modification; tRNA-queuosine biosynthesis. Transfers and isomerizes the ribose moiety from AdoMet to the 7-aminomethyl group of 7-deazaguanine (preQ1-tRNA) to give epoxyqueuosine (oQ-tRNA). The protein is S-adenosylmethionine:tRNA ribosyltransferase-isomerase of Nitratidesulfovibrio vulgaris (strain DP4) (Desulfovibrio vulgaris).